The chain runs to 117 residues: MLYETIGIVRPGNIAEVKELVLTAGKLILNQGGVIRDIKNWGTFLLPRPISTNQQRHNRGHYFVMRYDASIATHEEVRRTMKADPRVIRTANVKLGDGKLETLSRFGAIPWRSLEEA.

The protein belongs to the bacterial ribosomal protein bS6 family. As to quaternary structure, component of the mitochondrial small ribosomal subunit (mt-SSU). Mature N.crassa 74S mitochondrial ribosomes consist of a small (37S) and a large (54S) subunit. The 37S small subunit contains a 16S ribosomal RNA (16S mt-rRNA) and 32 different proteins. The 54S large subunit contains a 23S rRNA (23S mt-rRNA) and 42 different proteins.

Its subcellular location is the mitochondrion. Component of the mitochondrial ribosome (mitoribosome), a dedicated translation machinery responsible for the synthesis of mitochondrial genome-encoded proteins, including at least some of the essential transmembrane subunits of the mitochondrial respiratory chain. The mitoribosomes are attached to the mitochondrial inner membrane and translation products are cotranslationally integrated into the membrane. The polypeptide is Small ribosomal subunit protein bS6m (mrp17) (Neurospora crassa (strain ATCC 24698 / 74-OR23-1A / CBS 708.71 / DSM 1257 / FGSC 987)).